Consider the following 111-residue polypeptide: uncharacterized protein (111 aa).

Helical transmembrane passes span 4–22 (FWIL…QFFI), 49–71 (LLIL…LFFI), and 91–108 (YMYH…LIYV).

The protein resides in the cell membrane. This is an uncharacterized protein from Bacillus subtilis (strain 168).